A 202-amino-acid polypeptide reads, in one-letter code: Imidazoleglycerol-phosphate dehydratase (202 aa).

Belongs to the imidazoleglycerol-phosphate dehydratase family.

It localises to the cytoplasm. It carries out the reaction D-erythro-1-(imidazol-4-yl)glycerol 3-phosphate = 3-(imidazol-4-yl)-2-oxopropyl phosphate + H2O. The protein operates within amino-acid biosynthesis; L-histidine biosynthesis; L-histidine from 5-phospho-alpha-D-ribose 1-diphosphate: step 6/9. The polypeptide is Imidazoleglycerol-phosphate dehydratase (Sinorhizobium medicae (strain WSM419) (Ensifer medicae)).